The primary structure comprises 457 residues: Acetate--CoA ligase [ADP-forming] II subunit alpha (457 aa).

This sequence belongs to the acetate CoA ligase alpha subunit family. As to quaternary structure, heterotetramer of two alpha and two beta subunits.

The enzyme catalyses acetate + ATP + CoA = acetyl-CoA + ADP + phosphate. Its function is as follows. Catalyzes the reversible formation of acetate and ATP from acetyl-CoA by using ADP and phosphate. Can use other substrates such as phenylacetyl-CoA, indoleacetyl-CoA and isobutyryl-CoA, but not succinyl-CoA. Seems to be involved primarily in the degradation of aryl-CoA esters to the corresponding acids. Participates in the conversion of acetyl-CoA to acetate and in the degradation of branched-chain amino acids via branched-chain-acyl-CoA esters. This chain is Acetate--CoA ligase [ADP-forming] II subunit alpha, found in Pyrococcus furiosus (strain ATCC 43587 / DSM 3638 / JCM 8422 / Vc1).